We begin with the raw amino-acid sequence, 124 residues long: V-type proton ATPase subunit F 1 (124 aa).

The residue at position 87 (Ser87) is a Phosphoserine.

The protein belongs to the V-ATPase F subunit family. As to quaternary structure, V-ATPase is a heteromultimeric enzyme made up of two complexes: the ATP-hydrolytic V1 complex and the proton translocation V0 complex. The V1 complex consists of three catalytic AB heterodimers that form a heterohexamer, three peripheral stalks each consisting of EG heterodimers, one central rotor including subunits D and F, and the regulatory subunits C and H. The proton translocation complex V0 consists of the proton transport subunit a, a ring of proteolipid subunits c9c'', rotary subunit d, subunits e and f, and the accessory subunits VhaAC45 and ATP6AP2.

In terms of biological role, subunit of the V1 complex of vacuolar(H+)-ATPase (V-ATPase), a multisubunit enzyme composed of a peripheral complex (V1) that hydrolyzes ATP and a membrane integral complex (V0) that translocates protons. V-ATPase is responsible for acidifying and maintaining the pH of intracellular compartments and in some cell types, is targeted to the plasma membrane, where it is responsible for acidifying the extracellular environment. This chain is V-type proton ATPase subunit F 1 (Vha14-1), found in Drosophila melanogaster (Fruit fly).